A 753-amino-acid polypeptide reads, in one-letter code: Bile salt-activated lipase (753 aa).

The signal sequence occupies residues 1 to 20; sequence MGRLQLVVLGLTCCWAVASA. The interval 21 to 121 is heparin-binding; it reads AKLGAVYTEG…KQVSRDLPVM (101 aa). The cysteines at positions 84 and 100 are disulfide-linked. Residue Asn207 is glycosylated (N-linked (GlcNAc...) (complex) asparagine). Residue Ser214 is the Acyl-ester intermediate of the active site. Cysteines 266 and 277 form a disulfide. Residues Asp340 and His455 each act as charge relay system in the active site. The interval 555–753 is disordered; that stretch reads QEATPVPPTG…EAQMPAVIRF (199 aa). O-linked (GalNAc...) threonine glycosylation is found at Thr558, Thr569, and Thr579. 17 tandem repeats follow at residues 559-569, 570-580, 581-591, 592-602, 603-613, 614-624, 625-635, 636-646, 647-657, 658-668, 669-679, 680-690, 691-701, 702-712, 713-723, 724-734, and 735-745. Residues 559 to 745 form a 17 X 11 AA tandem repeats, glycodomain, O-linked (mucin type) region; it reads PVPPTGDSEA…VPPTDDSKEA (187 aa). 7 O-linked (GalNAc...) threonine glycosylation sites follow: Thr607, Thr618, Thr629, Thr640, Thr651, Thr662, and Thr673. The span at 668-683 shows a compositional bias: pro residues; it reads PPVPPTGDAGPPPVPP.

This sequence belongs to the type-B carboxylesterase/lipase family. Interacts with CLC. In terms of processing, N- and O-glycosylated. As to expression, mammary gland and pancreas. Detected in pancreatic and duodenal juice (at protein level). Expressed by eosinophils.

Its subcellular location is the secreted. The enzyme catalyses a triacylglycerol + H2O = a diacylglycerol + a fatty acid + H(+). It carries out the reaction 1,2,3-tri-(9Z-octadecenoyl)-glycerol + H2O = di-(9Z)-octadecenoylglycerol + (9Z)-octadecenoate + H(+). The catalysed reaction is 1,2,3-trioctanoylglycerol + H2O = dioctanoylglycerol + octanoate + H(+). It catalyses the reaction a sterol ester + H2O = a sterol + a fatty acid + H(+). The enzyme catalyses cholesteryl (9Z-octadecenoate) + H2O = cholesterol + (9Z)-octadecenoate + H(+). It carries out the reaction an acetyl ester + H2O = an aliphatic alcohol + acetate + H(+). The catalysed reaction is a butanoate ester + H2O = an aliphatic alcohol + butanoate + H(+). It catalyses the reaction 9-hexadecanoyloxy-octadecanoate + H2O = 9-hydroxy-octadecanoate + hexadecanoate + H(+). The enzyme catalyses 9-(9Z-octadecenoyloxy)-octadecanoate + H2O = 9-hydroxy-octadecanoate + (9Z)-octadecenoate + H(+). It carries out the reaction 1-hexadecanoyl-sn-glycero-3-phosphocholine + H2O = sn-glycerol 3-phosphocholine + hexadecanoate + H(+). The catalysed reaction is 12-hexadecanoyloxy-octadecanoate + H2O = 12-hydroxyoctadecanoate + hexadecanoate + H(+). It catalyses the reaction 12-(9Z-octadecenoyloxy)-octadecanoate + H2O = 12-hydroxyoctadecanoate + (9Z)-octadecenoate + H(+). The enzyme catalyses 13-(9Z-octadecenoyloxy)-octadecanoate + H2O = 13-hydroxy-octadecanoate + (9Z)-octadecenoate + H(+). It carries out the reaction 9-(9Z-hexadecenoyloxy)-octadecanoate + H2O = (9Z)-hexadecenoate + 9-hydroxy-octadecanoate + H(+). The catalysed reaction is 12-(9Z-hexadecenoyloxy)-octadecanoate + H2O = 12-hydroxyoctadecanoate + (9Z)-hexadecenoate + H(+). It catalyses the reaction 13-(9Z-hexadecenoyloxy)-octadecanoate + H2O = 13-hydroxy-octadecanoate + (9Z)-hexadecenoate + H(+). The enzyme catalyses 12-octadecanoyloxy-octadecanoate + H2O = 12-hydroxyoctadecanoate + octadecanoate + H(+). It carries out the reaction 13-octadecanoyloxy-octadecanoate + H2O = 13-hydroxy-octadecanoate + octadecanoate + H(+). The catalysed reaction is 5-(9Z-hexadecenoyloxy)-octadecanoate + H2O = 5-hydroxy-octadecanoate + (9Z)-hexadecenoate + H(+). It catalyses the reaction 9-octadecanoyloxy-octadecanoate + H2O = 9-hydroxy-octadecanoate + octadecanoate + H(+). Activated by bile salts such as sodium taurocholate. In terms of biological role, catalyzes the hydrolysis of a wide range of substrates including cholesteryl esters, phospholipids, lysophospholipids, di- and tri-acylglycerols, and fatty acid esters of hydroxy fatty acids (FAHFAs). Preferentially hydrolyzes FAHFAs with the ester bond further away from the carboxylate. Unsaturated FAHFAs are hydrolyzed more quickly than saturated FAHFAs. Has an essential role in the complete digestion of dietary lipids and their intestinal absorption, along with the absorption of fat-soluble vitamins. In Homo sapiens (Human), this protein is Bile salt-activated lipase (CEL).